A 594-amino-acid polypeptide reads, in one-letter code: Parathyroid hormone/parathyroid hormone-related peptide receptor (594 aa).

The first 28 residues, 1 to 28 (MGTARIAPGLALLLCCPVLSSAYALVDA), serve as a signal peptide directing secretion. The Extracellular segment spans residues 29-188 (DDVMTKEEQI…TREREVFDRL (160 aa)). Disulfide bonds link Cys-48–Cys-117, Cys-108–Cys-149, and Cys-132–Cys-171. The disordered stretch occupies residues 66–102 (DKGWTSASTSGKPRKDKASGKLYPESEEDKEAPTDSR). 4 N-linked (GlcNAc...) asparagine glycosylation sites follow: Asn-152, Asn-162, Asn-167, and Asn-177. A helical membrane pass occupies residues 189-209 (GMIYTVGYSMSLASLTVAVLI). Over 210–223 (LAYFRRLHCTRNYI) the chain is Cytoplasmic. Residues 224–244 (HMHLFLSFMLRAVSIFVKDAV) form a helical membrane-spanning segment. The Extracellular portion of the chain corresponds to 245 to 295 (LYSGATLDEAERLTEEELRAIAQAPPPPATAAAGYAGCRVAVTFFLYFLAT). The helical transmembrane segment at 296–316 (NYYWILVEGLYLHSLIFMAFF) threads the bilayer. Residues 317-319 (SEK) lie on the Cytoplasmic side of the membrane. A helical transmembrane segment spans residues 320–340 (KYLWGFTVFGWGLPAVFVAVW). Residues 341–361 (VSVRATLANTGCWDLSSGNKK) lie on the Extracellular side of the membrane. The helical transmembrane segment at 362-382 (WIIQVPILASIVLHFILFINI) threads the bilayer. Topologically, residues 383–405 (VRVLATKLRETNAGRCDTRQQYR) are cytoplasmic. A helical membrane pass occupies residues 406-426 (KLLKSTLVLMPLFGVHYIVFM). Topologically, residues 427–440 (ATPYTEVSGTLWQV) are extracellular. The chain crosses the membrane as a helical span at residues 441–461 (QMHYEMLFNSFQGFFVAIIYC). The Cytoplasmic portion of the chain corresponds to 462–594 (FCNGEVQAEI…LLQEEWETVM (133 aa)). The Important for interaction with G proteins motif lies at 475 to 478 (WSRW). Positions 525–594 (PTATTNGHPQ…LLQEEWETVM (70 aa)) are disordered. Over residues 543-558 (TPALETLETTPPATAA) the composition is skewed to low complexity. A Phosphothreonine modification is found at Thr-552.

It belongs to the G-protein coupled receptor 2 family. In terms of assembly, homodimer in the absence of bound ligand. Peptide hormone binding leads to dissociation of the homodimer. N-glycosylated.

The protein localises to the cell membrane. In terms of biological role, G-protein-coupled receptor for parathyroid hormone (PTH) and for parathyroid hormone-related peptide (PTHLH). Ligand binding causes a conformation change that triggers signaling via guanine nucleotide-binding proteins (G proteins) and modulates the activity of downstream effectors, such as adenylate cyclase (cAMP). PTH1R is coupled to G(s) G alpha proteins and mediates activation of adenylate cyclase activity. PTHLH dissociates from PTH1R more rapidly than PTH; as consequence, the cAMP response induced by PTHLH decays faster than the response induced by PTH. The sequence is that of Parathyroid hormone/parathyroid hormone-related peptide receptor (PTH1R) from Pongo abelii (Sumatran orangutan).